We begin with the raw amino-acid sequence, 153 residues long: Superoxide dismutase [Cu-Zn] (153 aa).

A glycan (N-linked (GlcNAc...) asparagine) is linked at Asn24. Positions 47, 49, and 64 each coordinate Cu cation. An intrachain disulfide couples Cys58 to Cys147. The Zn(2+) site is built by His64, His72, His81, and Asp84. Cu cation is bound at residue His121. Residues 126–137 show a composition bias toward basic and acidic residues; the sequence is DLGRGGNEESKK. The disordered stretch occupies residues 126-145; the sequence is DLGRGGNEESKKTGNAGPRP. Arg144 is a binding site for substrate.

This sequence belongs to the Cu-Zn superoxide dismutase family. As to quaternary structure, homodimer. The cofactor is Cu cation. It depends on Zn(2+) as a cofactor.

It localises to the cytoplasm. It carries out the reaction 2 superoxide + 2 H(+) = H2O2 + O2. Its function is as follows. Destroys radicals which are normally produced within the cells and which are toxic to biological systems. The protein is Superoxide dismutase [Cu-Zn] of Humicola lutea.